The sequence spans 61 residues: Large ribosomal subunit protein uL30 (61 aa).

The protein belongs to the universal ribosomal protein uL30 family. In terms of assembly, part of the 50S ribosomal subunit.

The protein is Large ribosomal subunit protein uL30 of Latilactobacillus sakei subsp. sakei (strain 23K) (Lactobacillus sakei subsp. sakei).